The sequence spans 603 residues: DNA mismatch repair protein MutL (603 aa).

The span at 336-346 shows a compositional bias: basic and acidic residues; sequence EVSKKQKEQQK. The interval 336–372 is disordered; sequence EVSKKQKEQQKSEQIQMSFEENRQPKEPPTLFSKPNI.

Belongs to the DNA mismatch repair MutL/HexB family.

Its function is as follows. This protein is involved in the repair of mismatches in DNA. It is required for dam-dependent methyl-directed DNA mismatch repair. May act as a 'molecular matchmaker', a protein that promotes the formation of a stable complex between two or more DNA-binding proteins in an ATP-dependent manner without itself being part of a final effector complex. This Listeria innocua serovar 6a (strain ATCC BAA-680 / CLIP 11262) protein is DNA mismatch repair protein MutL.